We begin with the raw amino-acid sequence, 349 residues long: Sensory histidine kinase/phosphatase NtrB (349 aa).

The PAS domain maps to Thr-5–Asp-78. The 214-residue stretch at Gly-136–Lys-349 folds into the Histidine kinase domain. The residue at position 139 (His-139) is a Phosphohistidine; by autocatalysis. Lys-329 serves as a coordination point for ATP.

Autophosphorylated.

Its subcellular location is the cytoplasm. It carries out the reaction ATP + protein L-histidine = ADP + protein N-phospho-L-histidine.. Member of the two-component regulatory system NtrB/NtrC, which controls expression of the nitrogen-regulated (ntr) genes in response to nitrogen limitation. Under conditions of nitrogen limitation, NtrB autophosphorylates and transfers the phosphoryl group to NtrC. In the presence of nitrogen, acts as a phosphatase that dephosphorylates and inactivates NtrC. In Escherichia coli O157:H7, this protein is Sensory histidine kinase/phosphatase NtrB (glnL).